We begin with the raw amino-acid sequence, 422 residues long: Protein phosphatase methylesterase 1 (422 aa).

Positions 1-27 (MSDMFRKSVLNKLPHLPPTRAPWADES) are disordered. Residues Ser207, Asp234, and His371 contribute to the active site.

The protein belongs to the AB hydrolase superfamily.

The enzyme catalyses [phosphatase 2A protein]-C-terminal L-leucine methyl ester + H2O = [phosphatase 2A protein]-C-terminal L-leucine + methanol + H(+). Its function is as follows. Demethylates proteins that have been reversibly carboxymethylated. Demethylates the phosphatase PP2A catalytic subunit. The sequence is that of Protein phosphatase methylesterase 1 (PPE1) from Cryptococcus neoformans var. neoformans serotype D (strain B-3501A) (Filobasidiella neoformans).